The chain runs to 206 residues: Ribonuclease M5 (206 aa).

The 84-residue stretch at 8 to 91 (NEVIVVEGRD…AFLNRDEARP (84 aa)) folds into the Toprim domain. The Mg(2+) site is built by glutamate 14, aspartate 60, and aspartate 62.

The protein belongs to the ribonuclease M5 family. Requires Mg(2+) as cofactor.

Its subcellular location is the cytoplasm. It carries out the reaction Endonucleolytic cleavage of RNA, removing 21 and 42 nucleotides, respectively, from the 5'- and 3'-termini of a 5S-rRNA precursor.. In terms of biological role, required for correct processing of both the 5' and 3' ends of 5S rRNA precursor. Cleaves both sides of a double-stranded region yielding mature 5S rRNA in one step. The sequence is that of Ribonuclease M5 from Lactococcus lactis subsp. lactis (strain IL1403) (Streptococcus lactis).